We begin with the raw amino-acid sequence, 480 residues long: Glutamate--tRNA ligase (480 aa).

The short motif at Pro21–Gly31 is the 'HIGH' region element. Zn(2+) is bound by residues Cys110, Cys112, Cys137, and His139. A 'KMSKS' region motif is present at residues Lys248–Arg252. Lys251 lines the ATP pocket.

The protein belongs to the class-I aminoacyl-tRNA synthetase family. Glutamate--tRNA ligase type 1 subfamily. Monomer. Zn(2+) serves as cofactor.

It localises to the cytoplasm. The enzyme catalyses tRNA(Glu) + L-glutamate + ATP = L-glutamyl-tRNA(Glu) + AMP + diphosphate. In terms of biological role, catalyzes the attachment of glutamate to tRNA(Glu) in a two-step reaction: glutamate is first activated by ATP to form Glu-AMP and then transferred to the acceptor end of tRNA(Glu). In Haemophilus influenzae (strain 86-028NP), this protein is Glutamate--tRNA ligase.